Here is a 93-residue protein sequence, read N- to C-terminus: Large ribosomal subunit protein eL42 (93 aa).

Zn(2+) contacts are provided by cysteine 11, cysteine 14, cysteine 71, and cysteine 74. The segment at 11–74 (CRYCGKHTLH…VNIRFRCTEC (64 aa)) adopts a C4-type zinc-finger fold.

The protein belongs to the eukaryotic ribosomal protein eL42 family. As to quaternary structure, part of the 50S ribosomal subunit. It depends on Zn(2+) as a cofactor.

Binds to the 23S rRNA. In Archaeoglobus fulgidus (strain ATCC 49558 / DSM 4304 / JCM 9628 / NBRC 100126 / VC-16), this protein is Large ribosomal subunit protein eL42.